Consider the following 562-residue polypeptide: MDDNKRPLYLPFAGPAILEAPLINKGSAFSEEERIFFNLEGLVPYAIETIEEQASRAYDQFRSFNNDLDKHIYLRNIQDTNETLFYRLVQNNISEMMPIIYTPTVGLACERFSKNYRRNRGLFISYPNKDRIDDILNNSTRQKVKIIVVTDGERILGLGDQGIGGMGIPIGKLSLYTSCGGISPAYTLPITLDVGTDNPQLLEDPMYMGWRHPRIGGEEYAEFIEAFMQAVHVRWPDTLIQFEDFAQKNAMPILERYKDRYCCFNDDIQGTAAVAVGSLLAACKAAGTELNQQRIAFLGAGSAGCGIAEAIVAQMVSEGISDEQARTQVCMVDRWGLLLDNMPNLLPFQQKLAQKCTNIQNWSNFSDNISLLDVVNNTKPTVLIGVSGVPGLFTEEIIRAMHSHCARPIIFPLSNPTSRVEATPKDILHWTSGQALVATGSPFEPVVVDGETFEIAQCNNSFIFPGIGLGVLASGARHVSDAMLMASSRALAECSPLAIDGSGPLLPKLEDIHAVSKHIAFAVGKVAVEQGLTLPMSDEILQQSIEGNFWSPEYRRYKRTSF.

Y101 acts as the Proton donor in catalysis. R154 is a binding site for NAD(+). K172 acts as the Proton acceptor in catalysis. 3 residues coordinate a divalent metal cation: E243, D244, and D267. Positions 267 and 415 each coordinate NAD(+).

The protein belongs to the malic enzymes family. As to quaternary structure, homotetramer. Mg(2+) serves as cofactor. Mn(2+) is required as a cofactor.

The catalysed reaction is (S)-malate + NAD(+) = pyruvate + CO2 + NADH. It catalyses the reaction oxaloacetate + H(+) = pyruvate + CO2. The polypeptide is NAD-dependent malic enzyme (Shewanella baltica (strain OS223)).